The primary structure comprises 799 residues: Protein phosphatase 1 regulatory subunit 3F (799 aa).

Residues 1 to 30 are disordered; sequence MARTAPVEPPLRHPAPPSPAAGEPRASAEA. Residues 1–772 are Cytoplasmic-facing; the sequence is MARTAPVEPP…LTQTLGVLAG (772 aa). Residues 7–19 are compositionally biased toward pro residues; sequence VEPPLRHPAPPSP. At Ser18 the chain carries Phosphoserine. Residues 20 to 30 show a composition bias toward low complexity; that stretch reads AAGEPRASAEA. The PP1-binding motif signature appears at 36–39; that stretch reads RVLF. Disordered stretches follow at residues 53-108, 201-235, 332-353, and 417-439; these read RYRP…PVPA, SPPG…SPDD, RRRP…LAEH, and ATCG…DRAA. Over residues 78–97 the composition is skewed to acidic residues; that stretch reads ADEEDDGEDGDEGEEEEEAF. Residues 127–283 form the CBM21 domain; the sequence is LERLGRVMVE…NNHGRNYTVL (157 aa). Positions 334-353 are enriched in basic and acidic residues; it reads RPFEEEPRMRSADDNTLAEH. Residue Ser545 is modified to Phosphoserine. Disordered regions lie at residues 566 to 600, 663 to 688, and 722 to 743; these read KDTE…PPEI, SKSP…SWVP, and PHVN…KRSP. The span at 569–579 shows a compositional bias: acidic residues; that stretch reads EDPDDEGEGED. Over residues 585-594 the composition is skewed to low complexity; the sequence is PSSPEGGSPK. Phosphoserine occurs at positions 587 and 592. Basic and acidic residues predominate over residues 679-688; it reads PTERESSWVP. The helical transmembrane segment at 773-793 threads the bilayer; the sequence is LVMVPVALNSGVSLLVLVLCL. Over 794–799 the chain is Extracellular; sequence SLAWFS.

In terms of tissue distribution, highly expressed in brain (at protein level).

The protein resides in the membrane. Functionally, glycogen-targeting subunit for protein phosphatase 1 (PP1). In Mus musculus (Mouse), this protein is Protein phosphatase 1 regulatory subunit 3F (Ppp1r3f).